The sequence spans 203 residues: MPSPSRKSRSRSRSRSKSPKRSPAKKARKTPKKPRAAGGVKKPSTLSMIVAAITAMKNRKGSSVQAIRKYILANNKGINTSHLGSAMKLAFAKGLKSGVLVRPKTSAGASGATGSFRVGKAPASPKKAKKAKSPKKKSSKNKSNNAKAKKSPRKKAAVKKSTKSKAKKPKSPKKKAAKKTARKSPKKKARKSPKKKAAKKSKK.

Residues 1 to 35 (MPSPSRKSRSRSRSRSKSPKRSPAKKARKTPKKPR) show a composition bias toward basic residues. Disordered stretches follow at residues 1-46 (MPSP…PSTL) and 104-203 (KTSA…KSKK). The H15 domain occupies 41–120 (KKPSTLSMIV…GATGSFRVGK (80 aa)). 2 stretches are compositionally biased toward basic residues: residues 126–140 (KKAKKAKSPKKKSSK) and 147–203 (KAKK…KSKK).

Post-translationally, PL-II* and PL-IV are produced by post-translational cleavage of a common precursor. Sperm.

The protein resides in the nucleus. It localises to the chromosome. Linker histones are implicated in chromatin remodeling and/or transcriptional regulation during spermiogenesis, the process of spermatid maturation into spermatozoa. Protamines substitute for histones in the chromatin of sperm during the haploid phase of spermatogenesis. They compact sperm DNA into a highly condensed, stable and inactive complex. The chain is Sperm-specific protein PHI-2B/PHI-3 from Mytilus trossulus (Blue mussel).